A 754-amino-acid polypeptide reads, in one-letter code: Pentatricopeptide repeat-containing protein At3g53700, chloroplastic (754 aa).

A chloroplast-targeting transit peptide spans 1–72 (MAFSSCLKFY…DSAALRLFNL (72 aa)). 17 PPR repeats span residues 82-116 (EPAL…RCEM), 117-152 (GTST…GLKP), 153-187 (DTHF…GIKP), 188-222 (DVST…GLVP), 223-257 (DEKT…GCSW), 258-288 (SNVS…MSNQ), 294-328 (DQYT…GYDP), 329-363 (DVYT…DCSP), 364-398 (NTVT…GILP), 399-433 (DVCT…GCEP), 434-468 (DEFT…GCAR), 469-503 (SVIT…GVSR), 504-538 (NSVT…GQKP), 539-573 (DKYT…GCEP), 574-608 (DIVT…GINL), 609-643 (TPHA…NEAP), and 645-680 (DAVS…GFVP).

It belongs to the PPR family. P subfamily.

The protein localises to the plastid. It is found in the chloroplast. Its function is as follows. May be involved in female gametophyte development. The chain is Pentatricopeptide repeat-containing protein At3g53700, chloroplastic (MEE40) from Arabidopsis thaliana (Mouse-ear cress).